Consider the following 245-residue polypeptide: tRNA (guanine-N(7)-)-methyltransferase (245 aa).

Glutamate 71, glutamate 96, aspartate 123, and aspartate 146 together coordinate S-adenosyl-L-methionine. The active site involves aspartate 146. Residue lysine 150 coordinates substrate. The interval 152 to 157 (KHNKRR) is interaction with RNA. Residues aspartate 182 and 224–227 (TKFE) contribute to the substrate site.

Belongs to the class I-like SAM-binding methyltransferase superfamily. TrmB family.

The catalysed reaction is guanosine(46) in tRNA + S-adenosyl-L-methionine = N(7)-methylguanosine(46) in tRNA + S-adenosyl-L-homocysteine. The protein operates within tRNA modification; N(7)-methylguanine-tRNA biosynthesis. Functionally, catalyzes the formation of N(7)-methylguanine at position 46 (m7G46) in tRNA. The polypeptide is tRNA (guanine-N(7)-)-methyltransferase (Albidiferax ferrireducens (strain ATCC BAA-621 / DSM 15236 / T118) (Rhodoferax ferrireducens)).